The chain runs to 373 residues: Dual-specificity RNA methyltransferase RlmN (373 aa).

Glutamate 94 serves as the catalytic Proton acceptor. The 240-residue stretch at 100 to 339 (EDDRATLCVS…VIVRKTRGDD (240 aa)) folds into the Radical SAM core domain. Residues cysteine 107 and cysteine 344 are joined by a disulfide bond. Residues cysteine 114, cysteine 118, and cysteine 121 each contribute to the [4Fe-4S] cluster site. Residues 168–169 (GE), serine 200, 222–224 (SIH), and asparagine 301 each bind S-adenosyl-L-methionine. Cysteine 344 functions as the S-methylcysteine intermediate in the catalytic mechanism.

The protein belongs to the radical SAM superfamily. RlmN family. The cofactor is [4Fe-4S] cluster.

The protein resides in the cytoplasm. The catalysed reaction is adenosine(2503) in 23S rRNA + 2 reduced [2Fe-2S]-[ferredoxin] + 2 S-adenosyl-L-methionine = 2-methyladenosine(2503) in 23S rRNA + 5'-deoxyadenosine + L-methionine + 2 oxidized [2Fe-2S]-[ferredoxin] + S-adenosyl-L-homocysteine. It carries out the reaction adenosine(37) in tRNA + 2 reduced [2Fe-2S]-[ferredoxin] + 2 S-adenosyl-L-methionine = 2-methyladenosine(37) in tRNA + 5'-deoxyadenosine + L-methionine + 2 oxidized [2Fe-2S]-[ferredoxin] + S-adenosyl-L-homocysteine. Functionally, specifically methylates position 2 of adenine 2503 in 23S rRNA and position 2 of adenine 37 in tRNAs. m2A2503 modification seems to play a crucial role in the proofreading step occurring at the peptidyl transferase center and thus would serve to optimize ribosomal fidelity. The sequence is that of Dual-specificity RNA methyltransferase RlmN from Shewanella sp. (strain W3-18-1).